The chain runs to 467 residues: Chromosomal replication initiator protein DnaA (467 aa).

The interval 1 to 90 (MSLSLWQQCL…KPVTQTPQAA (90 aa)) is domain I, interacts with DnaA modulators. The domain II stretch occupies residues 91–130 (VTSNVAAPAQVAQTQPQRAAPSTRSGWDNVPAPAEPTYRS). Low complexity predominate over residues 98 to 111 (PAQVAQTQPQRAAP). The disordered stretch occupies residues 98 to 119 (PAQVAQTQPQRAAPSTRSGWDN). A domain III, AAA+ region region spans residues 131–347 (NVNVKHTFDN…GALNRVIANA (217 aa)). ATP is bound by residues Gly-175, Gly-177, Lys-178, and Thr-179. The segment at 348-467 (NFTGRAITID…FSNLIRTLSS (120 aa)) is domain IV, binds dsDNA.

Belongs to the DnaA family. As to quaternary structure, oligomerizes as a right-handed, spiral filament on DNA at oriC.

It localises to the cytoplasm. Functionally, plays an essential role in the initiation and regulation of chromosomal replication. ATP-DnaA binds to the origin of replication (oriC) to initiate formation of the DNA replication initiation complex once per cell cycle. Binds the DnaA box (a 9 base pair repeat at the origin) and separates the double-stranded (ds)DNA. Forms a right-handed helical filament on oriC DNA; dsDNA binds to the exterior of the filament while single-stranded (ss)DNA is stabiized in the filament's interior. The ATP-DnaA-oriC complex binds and stabilizes one strand of the AT-rich DNA unwinding element (DUE), permitting loading of DNA polymerase. After initiation quickly degrades to an ADP-DnaA complex that is not apt for DNA replication. Binds acidic phospholipids. In Shigella boydii serotype 4 (strain Sb227), this protein is Chromosomal replication initiator protein DnaA.